The following is a 397-amino-acid chain: Acetate kinase 2 (397 aa).

Asn-8 contacts Mg(2+). Lys-15 is a binding site for ATP. Arg-89 lines the substrate pocket. Asp-146 functions as the Proton donor/acceptor in the catalytic mechanism. ATP is bound by residues 206–210 (HLGNG), 281–283 (DLR), and 329–333 (GIGEN). Position 382 (Glu-382) interacts with Mg(2+).

The protein belongs to the acetokinase family. Homodimer. It depends on Mg(2+) as a cofactor. Mn(2+) is required as a cofactor.

The protein resides in the cytoplasm. The catalysed reaction is acetate + ATP = acetyl phosphate + ADP. It participates in metabolic intermediate biosynthesis; acetyl-CoA biosynthesis; acetyl-CoA from acetate: step 1/2. Its function is as follows. Catalyzes the formation of acetyl phosphate from acetate and ATP. Can also catalyze the reverse reaction. The polypeptide is Acetate kinase 2 (Listeria monocytogenes serotype 4b (strain F2365)).